The sequence spans 266 residues: Glutathione S-transferase AN1595 (266 aa).

The 81-residue stretch at 43 to 123 (SFGKLYTYKR…HVTNEDSTTT (81 aa)) folds into the GST N-terminal domain. 4 residues coordinate glutathione: K93, E107, C108, and N143. K93 serves as a coordination point for substrate. The GST C-terminal domain occupies 128–259 (SSLDFVQIIR…VEEGLPNAPP (132 aa)).

The protein belongs to the GST superfamily.

It functions in the pathway secondary metabolite biosynthesis; terpenoid biosynthesis. Glutathione S-transferase; part of the gene cluster that mediates the biosynthesis of the diterpene ent-pimara-8(14),15-diene (PD). Within the cluster, the HMG-CoA reductase AN1593 functions in the mevalonate pathway, which produces isoprenoid precursors. The geranylgeranyl pyrophosphate (GGPP) synthase AN1592 is needed in the formation of GGPP, the precursor for diterpenes. Lastly, the pimaradiene synthase pbcA performs the 2 cyclization steps that convert GGPP to ent-pimara-8(14),15-diene. The putative roles of the remaining cluster enzymes in ent-pimara-8(14),15-diene biosynthesis is unclear. The cytochrome P450 monooxygenase AN1598, the glutathione S-transferase AN1595, the oxidoreductases AN1596 and AN1597 probably function as decorative enzymes. It is possible that in biological conditions the compound is oxidized to ent-pimara-8(14),15-dien-19-oic acid, which is a bioactive diterpene compound predominant in many plant extracts. This Emericella nidulans (strain FGSC A4 / ATCC 38163 / CBS 112.46 / NRRL 194 / M139) (Aspergillus nidulans) protein is Glutathione S-transferase AN1595.